Reading from the N-terminus, the 562-residue chain is Arginine--tRNA ligase (562 aa).

The short motif at 122-132 (PNIAKPISMGH) is the 'HIGH' region element.

The protein belongs to the class-I aminoacyl-tRNA synthetase family. As to quaternary structure, monomer.

The protein localises to the cytoplasm. The enzyme catalyses tRNA(Arg) + L-arginine + ATP = L-arginyl-tRNA(Arg) + AMP + diphosphate. This Pediococcus pentosaceus (strain ATCC 25745 / CCUG 21536 / LMG 10740 / 183-1w) protein is Arginine--tRNA ligase.